Here is a 324-residue protein sequence, read N- to C-terminus: Probable 6-phosphogluconolactonase 4, chloroplastic (324 aa).

The N-terminal 61 residues, 1-61 (MSVSAAVAAA…RAPAMATDCA (61 aa)), are a transit peptide targeting the chloroplast. The tract at residues 20 to 43 (RRRSPPASRVAATSRGRPFSSGPH) is disordered. The segment covering 24–34 (PPASRVAATSR) has biased composition (low complexity).

This sequence belongs to the glucosamine/galactosamine-6-phosphate isomerase family. 6-phosphogluconolactonase subfamily.

Its subcellular location is the plastid. It is found in the chloroplast. The catalysed reaction is 6-phospho-D-glucono-1,5-lactone + H2O = 6-phospho-D-gluconate + H(+). Its pathway is carbohydrate degradation; pentose phosphate pathway; D-ribulose 5-phosphate from D-glucose 6-phosphate (oxidative stage): step 2/3. Functionally, hydrolysis of 6-phosphogluconolactone to 6-phosphogluconate. This Oryza sativa subsp. indica (Rice) protein is Probable 6-phosphogluconolactonase 4, chloroplastic.